The primary structure comprises 287 residues: MQTEIDASVIVKEKEWLETNVLPEFWESMSEGLKEALNLISSDDPTVLVFTSPKTDAVKGIVSRSSSNVVRVNVTAKVGRTTHVLKLKDSAIIHLDQILNLSNYMHYALYCLPRLRHNTERAIKELQEILHAIVCLLHSIMQEESEKEEIPSNASSISLKSQNSIVSRTSNPFSCLNHSPRQIHKTVRNHLFSPPLPSNLALSFSISNASVCLHLFRLSGPNEVLESFAKNSVDIEMLKPFVSQRIDAFSQDPILLAVTAKLSALQKKVNDVSYRFKTISSSLYGAK.

Component of the RAVE complex composed of rav1, rav2 and skp1.

It localises to the cytoplasm. Its subcellular location is the nucleus. In terms of biological role, component of the RAVE complex which is required for stable assembly of the vacuolar ATPase complex V-ATPase. This Schizosaccharomyces pombe (strain 972 / ATCC 24843) (Fission yeast) protein is Regulator of V-ATPase in vacuolar membrane protein 2 (rav2).